A 318-amino-acid chain; its full sequence is Biotin synthase (318 aa).

The Radical SAM core domain maps to 36-258 (HDPREVQLCT…VATTRILFPD (223 aa)). [4Fe-4S] cluster is bound by residues C54, C58, and C61. 4 residues coordinate [2Fe-2S] cluster: C98, C130, C190, and R262.

It belongs to the radical SAM superfamily. Biotin synthase family. As to quaternary structure, homodimer. [4Fe-4S] cluster is required as a cofactor. Requires [2Fe-2S] cluster as cofactor.

The enzyme catalyses (4R,5S)-dethiobiotin + (sulfur carrier)-SH + 2 reduced [2Fe-2S]-[ferredoxin] + 2 S-adenosyl-L-methionine = (sulfur carrier)-H + biotin + 2 5'-deoxyadenosine + 2 L-methionine + 2 oxidized [2Fe-2S]-[ferredoxin]. It participates in cofactor biosynthesis; biotin biosynthesis; biotin from 7,8-diaminononanoate: step 2/2. In terms of biological role, catalyzes the conversion of dethiobiotin (DTB) to biotin by the insertion of a sulfur atom into dethiobiotin via a radical-based mechanism. This chain is Biotin synthase, found in Gloeobacter violaceus (strain ATCC 29082 / PCC 7421).